We begin with the raw amino-acid sequence, 371 residues long: tRNA-specific 2-thiouridylase MnmA (371 aa).

ATP is bound by residues 13 to 20 (GMSGGVDS) and Met39. Positions 99–101 (NPD) are interaction with target base in tRNA. Cys104 functions as the Nucleophile in the catalytic mechanism. Cys104 and Cys200 are oxidised to a cystine. Gly128 serves as a coordination point for ATP. The segment at 150–152 (KDQ) is interaction with tRNA. Residue Cys200 is the Cysteine persulfide intermediate of the active site. The segment at 308–309 (RY) is interaction with tRNA.

This sequence belongs to the MnmA/TRMU family.

It is found in the cytoplasm. It carries out the reaction S-sulfanyl-L-cysteinyl-[protein] + uridine(34) in tRNA + AH2 + ATP = 2-thiouridine(34) in tRNA + L-cysteinyl-[protein] + A + AMP + diphosphate + H(+). Its function is as follows. Catalyzes the 2-thiolation of uridine at the wobble position (U34) of tRNA, leading to the formation of s(2)U34. This is tRNA-specific 2-thiouridylase MnmA from Geobacillus thermodenitrificans (strain NG80-2).